Here is a 342-residue protein sequence, read N- to C-terminus: MMEMITIKPGKITVQANPNMPKEVAELFRKQHYEIVGRHSGVKLCHWLKKSLTEGRFCYKQKFYGIHSHRCLQMTPVLAWCTHNCIFCWRPMENFLGTELPQPWDDPAFIVEESIKAQRKLLIGYKGNPKVDKKKFEEAWNPTHAAISLSGEPMLYPYMGDLVEEFHKRGFTTFIVTNGTIPERLEEMIKEDKLPTQLYVSITAPDIETYNSVNIPMIPDGWERILRFLELMRDLPTRTVVRLTLVKGENMHSPEKYAKLILKARPMFVEAKAYMFVGYSRNRLTINNMPSHQDIREFAEALVKHLPGYHIEDEYEPSRVVLIMRDDVDPQGTGVEGRFIKH.

The [2Fe-2S] cluster site is built by Cys-45, Cys-58, and Cys-71. The Radical SAM core domain occupies 64–312 (YGIHSHRCLQ…VKHLPGYHIE (249 aa)). Positions 81, 85, and 88 each coordinate [4Fe-4S] cluster.

It belongs to the TYW1 family. Monomer. Requires [2Fe-2S] cluster as cofactor. [4Fe-4S] cluster serves as cofactor.

It localises to the cytoplasm. It carries out the reaction N(1)-methylguanosine(37) in tRNA(Phe) + pyruvate + S-adenosyl-L-methionine = 4-demethylwyosine(37) in tRNA(Phe) + 5'-deoxyadenosine + L-methionine + CO2 + H2O. Its function is as follows. Component of the wyosine derivatives biosynthesis pathway that catalyzes the condensation of N-methylguanine with 2 carbon atoms from pyruvate to form the tricyclic 4-demethylwyosine (imG-14) on guanosine-37 of tRNA(Phe). The polypeptide is S-adenosyl-L-methionine-dependent tRNA 4-demethylwyosine synthase (Pyrococcus horikoshii (strain ATCC 700860 / DSM 12428 / JCM 9974 / NBRC 100139 / OT-3)).